The primary structure comprises 337 residues: Beta-hexosaminidase (337 aa).

Substrate contacts are provided by residues Asp62, Arg70, Arg133, and 163-164 (KH). His176 acts as the Proton donor/acceptor in catalysis. Residue Asp248 is the Nucleophile of the active site.

The protein belongs to the glycosyl hydrolase 3 family. NagZ subfamily.

It is found in the cytoplasm. It carries out the reaction Hydrolysis of terminal non-reducing N-acetyl-D-hexosamine residues in N-acetyl-beta-D-hexosaminides.. Its pathway is cell wall biogenesis; peptidoglycan recycling. Functionally, plays a role in peptidoglycan recycling by cleaving the terminal beta-1,4-linked N-acetylglucosamine (GlcNAc) from peptide-linked peptidoglycan fragments, giving rise to free GlcNAc, anhydro-N-acetylmuramic acid and anhydro-N-acetylmuramic acid-linked peptides. The protein is Beta-hexosaminidase of Psychromonas ingrahamii (strain DSM 17664 / CCUG 51855 / 37).